We begin with the raw amino-acid sequence, 607 residues long: Elongation factor 4 (607 aa).

Residues Ser-11 to Ala-193 form the tr-type G domain. Residues Asp-23–Thr-28 and Asn-140–Asp-143 contribute to the GTP site.

This sequence belongs to the TRAFAC class translation factor GTPase superfamily. Classic translation factor GTPase family. LepA subfamily.

The protein localises to the cell membrane. It catalyses the reaction GTP + H2O = GDP + phosphate + H(+). Functionally, required for accurate and efficient protein synthesis under certain stress conditions. May act as a fidelity factor of the translation reaction, by catalyzing a one-codon backward translocation of tRNAs on improperly translocated ribosomes. Back-translocation proceeds from a post-translocation (POST) complex to a pre-translocation (PRE) complex, thus giving elongation factor G a second chance to translocate the tRNAs correctly. Binds to ribosomes in a GTP-dependent manner. This is Elongation factor 4 from Bacillus cereus (strain ATCC 14579 / DSM 31 / CCUG 7414 / JCM 2152 / NBRC 15305 / NCIMB 9373 / NCTC 2599 / NRRL B-3711).